The sequence spans 1470 residues: Collagen alpha-1(XVII) chain (1470 aa).

3 disordered regions span residues 1–155 (MDVT…PSTR), 167–193 (KGSR…GTVE), and 422–452 (SAEN…GGAS). At 1–476 (MDVTKKSKRD…CGSCCSWWKW (476 aa)) the chain is on the cytoplasmic side. The segment at 1-573 (MDVTKKSKRD…MTEQENGNLR (573 aa)) is nonhelical region (NC16). The span at 9-19 (RDGTEVTERIV) shows a compositional bias: basic and acidic residues. Low complexity predominate over residues 60–74 (GSSGYINSSGSIRGN). Composition is skewed to polar residues over residues 75–96 (ASTS…SPGS), 111–120 (EGSSSGNSSP), and 170–184 (RSAS…SNTL). Residues 146–231 (RLQSASPSTR…WSSTLPAGSS (86 aa)) are necessary for interaction with DST and for the recruitment of DST to hemidesmosome. Positions 430 to 452 (RGGGGGRGKGGGAGGGGGGGGAS) are enriched in gly residues. A helical; Signal-anchor for type II membrane protein transmembrane segment spans residues 477–497 (LLGLLLTWLLLLGLLFGLIAL). The Extracellular segment spans residues 498–1470 (AEEVRKLKAR…RRKRSIAIKP (973 aa)). S551 carries the phosphoserine; by CK2 modification. Disordered regions lie at residues 568–873 (ENGN…FLSS), 885–999 (GVDL…SSSG), 1159–1181 (DYRN…NAWS), 1194–1220 (TAGL…GVSA), and 1249–1298 (FIVG…TNGG). The tract at residues 574 to 1456 (GSPGPKGDMG…KGEKGDKGDQ (883 aa)) is triple-helical region. The span at 597 to 609 (PGIPGPLGHPGPE) shows a compositional bias: pro residues. Low complexity-rich tracts occupy residues 742–755 (EPGA…AGAD) and 781–803 (DPGK…PGRP). Over residues 827–848 (PGPPGPPGAMGPPGPPGTPGPA) the composition is skewed to pro residues. The segment covering 850–873 (PAGLPGQQGPRGEPGLAGDSFLSS) has biased composition (low complexity). Pro residues-rich tracts occupy residues 891 to 914 (PPGP…PRGP), 940 to 949 (PPGPPGPPGP), 982 to 992 (PPGPPGPPGPP), 1166 to 1175 (PPGPPGPPGM), 1201 to 1215 (PGPP…PRGP), and 1253 to 1262 (PPGPPGPQGP). N1273 carries N-linked (GlcNAc...) asparagine glycosylation. Residues 1275-1290 (SSNSSARRGTSYSSST) are compositionally biased toward low complexity. Residue N1395 is glycosylated (N-linked (GlcNAc...) asparagine). The segment at 1406–1470 (TYGTIPGPPG…RRKRSIAIKP (65 aa)) is disordered. The segment covering 1434-1443 (PRGPPGPPGP) has biased composition (pro residues). Over residues 1446 to 1455 (NKGEKGDKGD) the composition is skewed to basic and acidic residues. The nonhelical region (NC1) stretch occupies residues 1457–1470 (VYTGRRKRSIAIKP). The span at 1460-1470 (GRRKRSIAIKP) shows a compositional bias: basic residues.

In terms of assembly, homotrimers of alpha 1(XVII)chains. Interacts (via cytoplasmic region) with ITGB4 (via cytoplasmic region). Interacts (via cytoplasmic region) with DST (via N-terminus). Interacts (via N-terminus) with PLEC. Interacts (via cytoplasmic region) with DSP. In terms of processing, the intracellular/endo domain is disulfide-linked. Post-translationally, prolines at the third position of the tripeptide repeating unit (G-X-Y) are hydroxylated in some or all of the chains. The ectodomain is shedded from the surface of keratinocytes resulting in a 120-kDa soluble form, also named as 120 kDa linear IgA disease antigen homolog. The shedding is mediated by membrane-bound metalloproteases. This cleavage is inhibited by phosphorylation at Ser-551.

It localises to the cell junction. It is found in the hemidesmosome. Its subcellular location is the membrane. The protein localises to the secreted. The protein resides in the extracellular space. It localises to the extracellular matrix. It is found in the basement membrane. Functionally, may play a role in the integrity of hemidesmosome and the attachment of basal keratinocytes to the underlying basement membrane. Its function is as follows. The 120 kDa linear IgA disease antigen homolog is an anchoring filament component involved in dermal-epidermal cohesion. The chain is Collagen alpha-1(XVII) chain (Col17a1) from Mus musculus (Mouse).